A 113-amino-acid polypeptide reads, in one-letter code: Protein RALF-like 31 (113 aa).

The N-terminal stretch at 1-21 is a signal peptide; the sequence is MFNSTALVIFAILFLLISADA. Residues 22 to 58 constitute a propeptide, removed in mature form; sequence FPIPSPNGEIDAMLIRNSIIGEDEDLMPTEISRRVLM. 2 disulfides stabilise this stretch: C76–C86 and C98–C104.

This sequence belongs to the plant rapid alkalinization factor (RALF) family. In terms of processing, proteolytically cleaved, probably by S1P, a subtilisin-like serine protease (subtilase).

The protein localises to the secreted. Functionally, cell signaling peptide that may regulate plant stress, growth, and development. Mediates a rapid alkalinization of extracellular space by mediating a transient increase in the cytoplasmic Ca(2+) concentration leading to a calcium-dependent signaling events through a cell surface receptor and a concomitant activation of some intracellular mitogen-activated protein kinases. The sequence is that of Protein RALF-like 31 (RALFL31) from Arabidopsis thaliana (Mouse-ear cress).